Reading from the N-terminus, the 731-residue chain is Polyribonucleotide nucleotidyltransferase (731 aa).

2 residues coordinate Mg(2+): Asp488 and Asp494. One can recognise a KH domain in the interval 555–614 (PRIEVINIAVDKIRDVIGSGGKVIREIVEQTGAKINIEDDGTIKIASADAKTIEAAKRWI). The S1 motif domain occupies 624 to 692 (GAIYQGTVVK…ERGKVRLSMK (69 aa)). The segment at 693 to 731 (AVDQKTGKEMTDDKSVKEEKCMDEKKQPENKRRRKKKEE) is disordered. Positions 694–722 (VDQKTGKEMTDDKSVKEEKCMDEKKQPEN) are enriched in basic and acidic residues.

This sequence belongs to the polyribonucleotide nucleotidyltransferase family. Mg(2+) serves as cofactor.

It is found in the cytoplasm. The catalysed reaction is RNA(n+1) + phosphate = RNA(n) + a ribonucleoside 5'-diphosphate. Functionally, involved in mRNA degradation. Catalyzes the phosphorolysis of single-stranded polyribonucleotides processively in the 3'- to 5'-direction. In Bartonella tribocorum (strain CIP 105476 / IBS 506), this protein is Polyribonucleotide nucleotidyltransferase.